The sequence spans 857 residues: Protein dalmatian (857 aa).

2 disordered regions span residues 1 to 50 (MVRT…KLSI) and 146 to 194 (VQKS…FFHR). 2 stretches are compositionally biased toward polar residues: residues 146–156 (VQKSTQPQNIK) and 165–176 (SPCQQRIRSKSP). 4 positions are modified to phosphoserine: Ser173, Ser175, Ser184, and Ser222. Over residues 251–271 (GKPRAKRTAKKVRPVGNRRKV) the composition is skewed to basic residues. Residues 251 to 281 (GKPRAKRTAKKVRPVGNRRKVSTKDNEPEPV) form a disordered region. Ser405 is subject to Phosphoserine. Disordered regions lie at residues 470–514 (SICP…NAEN) and 737–830 (PPRP…RDIE). Residues 771 to 781 (KQPRRTYVKER) are compositionally biased toward basic and acidic residues. Acidic residues predominate over residues 797 to 806 (SESEDEDEQD). The segment covering 807 to 816 (SHDKSLDSPE) has biased composition (basic and acidic residues). A compositionally biased stretch (basic residues) spans 817-826 (KKRHHVKRPR).

The protein localises to the nucleus. It is found in the chromosome. Regulator of sister chromatid cohesion in mitosis. Probably involved in development of the central nervous system. The polypeptide is Protein dalmatian (dmt) (Drosophila melanogaster (Fruit fly)).